A 503-amino-acid polypeptide reads, in one-letter code: T-complex protein 11 homolog (503 aa).

The span at 1 to 22 (MPDVKESVPPKYPGDSEGRSCK) shows a compositional bias: basic and acidic residues. Disordered regions lie at residues 1-42 (MPDV…PPPF) and 254-285 (DLTM…NPEP). Residues 263 to 285 (PDTSDSSSVAGPSPNEAANNPEP) show a composition bias toward low complexity. A helical transmembrane segment spans residues 330 to 349 (LTVMASVLLVASSFSGSVLF).

It belongs to the TCP11 family. In terms of assembly, found in a complex at least composed of MROH2B, PRKACA isoform 2 and TCP11. Interacts with MROH2B. Interacts with PRKACA isoform 2. Isoform 2 and isoform 3 interact with ODF1 (via leucine zipper motif). Post-translationally, constitutively phosphorylated on serine, threonine and tyrosine residues within the head and tail regions of noncapacitated spermatozoa. Phosphorylation on tyrosine residues increases upon sperm capacitation within the acrosomal region in a protein kinase A (PKA)-dependent signaling pathway. As to expression, isoform 2 and isoform 3 are expressed in sperm. Isoform 1 is not detected in sperm (at protein level). Testis-specific. Isoform 1, isoform 2 and isoform 3 are expressed in sperm.

The protein resides in the membrane. It localises to the cell projection. It is found in the cilium. The protein localises to the flagellum. Its subcellular location is the cytoplasmic vesicle. The protein resides in the secretory vesicle. It localises to the acrosome. Functionally, plays a role in the process of sperm capacitation and acrosome reactions. Probable receptor for the putative fertilization-promoting peptide (FPP) at the sperm membrane that may modulate the activity of the adenylyl cyclase cAMP pathway. This chain is T-complex protein 11 homolog (TCP11), found in Homo sapiens (Human).